We begin with the raw amino-acid sequence, 369 residues long: Anhydro-N-acetylmuramic acid kinase (369 aa).

12 to 19 (GTSLDGVD) contacts ATP.

Belongs to the anhydro-N-acetylmuramic acid kinase family.

The enzyme catalyses 1,6-anhydro-N-acetyl-beta-muramate + ATP + H2O = N-acetyl-D-muramate 6-phosphate + ADP + H(+). It participates in amino-sugar metabolism; 1,6-anhydro-N-acetylmuramate degradation. It functions in the pathway cell wall biogenesis; peptidoglycan recycling. Catalyzes the specific phosphorylation of 1,6-anhydro-N-acetylmuramic acid (anhMurNAc) with the simultaneous cleavage of the 1,6-anhydro ring, generating MurNAc-6-P. Is required for the utilization of anhMurNAc either imported from the medium or derived from its own cell wall murein, and thus plays a role in cell wall recycling. The sequence is that of Anhydro-N-acetylmuramic acid kinase from Shigella flexneri serotype 5b (strain 8401).